A 137-amino-acid polypeptide reads, in one-letter code: Fluoride-specific ion channel FluC 1 (137 aa).

4 consecutive transmembrane segments (helical) span residues 4 to 24 (LIYI…YYLG), 37 to 57 (LATL…TTYI), 67 to 87 (VITG…TFSV), and 98 to 118 (WGIA…MSGL). The Na(+) site is built by Gly-77 and Thr-80.

The protein belongs to the fluoride channel Fluc/FEX (TC 1.A.43) family.

The protein resides in the cell membrane. The enzyme catalyses fluoride(in) = fluoride(out). Its activity is regulated as follows. Na(+) is not transported, but it plays an essential structural role and its presence is essential for fluoride channel function. Functionally, fluoride-specific ion channel. Important for reducing fluoride concentration in the cell, thus reducing its toxicity. The chain is Fluoride-specific ion channel FluC 1 from Bacillus cereus (strain ZK / E33L).